The following is a 563-amino-acid chain: MRSRSLLLVALATLLLHASASASDDDLDYLIDNADDIPANDPDGWLQEGSPDDDDDDDLFHHGQAQDHPIDETHVFLLSAANFSDFLASHRHVMVEFYAPWCAHCQALAPDYAAAAADLSPLAHQVALAKVDATEDTDLAQKYDVQGFPTILFFIDGVPKDYNGARTKEAIVSWVNKKLAPGVQNITTVDEAEKILTGEDKAILAVLDSLSGAHSDEIAAASRLEDAINFYQTSNPDVAKLFHLDPAAKRPSLVLLKKQEEEKLTFYDGPFKASAIADFVSANKLPLVNTLTQETAPSIFDNPIKKQILLFVVANESSKFLPIFKEASKSFKGKLLFVFVERDNEEVGEPVANYFGITGQETTVLAYTGNEDARNFFLDGEISVENIKRFAEDFLEEKLTPFYKSEPVPESNEGDVKIVVGKNLDQIVLDESKDALLEIYAPWCGHCQELEPTYNKLGKHLRGIDSLVIAKMDGTANEHPRAKPDGFPTILFYPAGKKSFEPITFEGDRTVVEMYKFIKKHASIPFKLKRPDSSATKTEKDQSTASTNLRGERSSGTNFKDEL.

Positions 1–22 (MRSRSLLLVALATLLLHASASA) are cleaved as a signal peptide. The interval 40 to 64 (NDPDGWLQEGSPDDDDDDDLFHHGQ) is disordered. In terms of domain architecture, Thioredoxin 1 spans 46 to 180 (LQEGSPDDDD…IVSWVNKKLA (135 aa)). N-linked (GlcNAc...) asparagine glycosylation is present at asparagine 82. Residues cysteine 102 and cysteine 105 each act as nucleophile in the active site. A disulfide bridge connects residues cysteine 102 and cysteine 105. Residues asparagine 185 and asparagine 315 are each glycosylated (N-linked (GlcNAc...) asparagine). The Thioredoxin 2 domain maps to 394-523 (FLEEKLTPFY…MYKFIKKHAS (130 aa)). Residues cysteine 444 and cysteine 447 each act as nucleophile in the active site. An intrachain disulfide couples cysteine 444 to cysteine 447. Over residues 529–542 (KRPDSSATKTEKDQ) the composition is skewed to basic and acidic residues. The disordered stretch occupies residues 529–563 (KRPDSSATKTEKDQSTASTNLRGERSSGTNFKDEL). Positions 543–563 (STASTNLRGERSSGTNFKDEL) are enriched in polar residues. The Prevents secretion from ER signature appears at 560–563 (KDEL).

It belongs to the protein disulfide isomerase family.

The protein localises to the endoplasmic reticulum lumen. It carries out the reaction Catalyzes the rearrangement of -S-S- bonds in proteins.. Acts as a protein-folding catalyst that interacts with nascent polypeptides to catalyze the formation, isomerization, and reduction or oxidation of disulfide bonds. May play a role in storage protein biogenesis. The sequence is that of Protein disulfide isomerase-like 1-4 (PDIL1-4) from Oryza sativa subsp. japonica (Rice).